The following is a 192-amino-acid chain: Calcium-binding protein K (192 aa).

EF-hand domains follow at residues 60–95 and 96–131; these read WDEA…MAKA and PTLD…VVCC. Aspartate 73, aspartate 75, asparagine 77, glutamate 84, aspartate 109, aspartate 111, serine 113, tyrosine 115, and glutamate 120 together coordinate Ca(2+).

It belongs to the recoverin family.

The chain is Calcium-binding protein K (cbpK) from Dictyostelium discoideum (Social amoeba).